The following is a 369-amino-acid chain: MSQNIVPKSAYREIMLSGHPMMDVRAPIEFNKGAFPSSTNLPLMQDSERQKVGTCYKNKGQDAAIALGHSLVNGQIKQQRVEAWLEFISLHPNAYLYCFRGGLRSQLTQQWIKEAGIEIPYVEGGYKAMRQYLIEVIDEAPKQSPIHILSGITGSGKTDFLLQRSEAIDLEGLAHHRGSSFGRYHEPQPSQINFENNLAVSLLKHQERAEKCLLVEDESFLIGRSAIPKQFYSGMQAADMLVLEEPEGARLNRLLNEYVHKMHSGYVERLGEEAGFDAFAEYLSQSITGIKKRLGGQLHDEFQSIIANALNIQRQRGDTQPHMEWISLLLTKYYDPMYQYQLDKKQSRVIFKGSHQAMHEWLDEYSSKG.

The region spanning 15–138 (MLSGHPMMDV…MRQYLIEVID (124 aa)) is the Rhodanese domain. C98 (S-selanylcysteine intermediate) is an active-site residue.

It belongs to the SelU family. In terms of assembly, monomer.

It carries out the reaction 5-methylaminomethyl-2-thiouridine(34) in tRNA + selenophosphate + (2E)-geranyl diphosphate + H2O + H(+) = 5-methylaminomethyl-2-selenouridine(34) in tRNA + (2E)-thiogeraniol + phosphate + diphosphate. The catalysed reaction is 5-methylaminomethyl-2-thiouridine(34) in tRNA + (2E)-geranyl diphosphate = 5-methylaminomethyl-S-(2E)-geranyl-thiouridine(34) in tRNA + diphosphate. It catalyses the reaction 5-methylaminomethyl-S-(2E)-geranyl-thiouridine(34) in tRNA + selenophosphate + H(+) = 5-methylaminomethyl-2-(Se-phospho)selenouridine(34) in tRNA + (2E)-thiogeraniol. The enzyme catalyses 5-methylaminomethyl-2-(Se-phospho)selenouridine(34) in tRNA + H2O = 5-methylaminomethyl-2-selenouridine(34) in tRNA + phosphate. Functionally, involved in the post-transcriptional modification of the uridine at the wobble position (U34) of tRNA(Lys), tRNA(Glu) and tRNA(Gln). Catalyzes the conversion of 2-thiouridine (S2U-RNA) to 2-selenouridine (Se2U-RNA). Acts in a two-step process involving geranylation of 2-thiouridine (S2U) to S-geranyl-2-thiouridine (geS2U) and subsequent selenation of the latter derivative to 2-selenouridine (Se2U) in the tRNA chain. This is tRNA 2-selenouridine synthase from Shewanella sediminis (strain HAW-EB3).